The primary structure comprises 449 residues: Na(+)/H(+) antiporter NhaA (449 aa).

12 consecutive transmembrane segments (helical) span residues 30 to 50 (IFLI…WAGA), 69 to 89 (FGLT…FLVA), 112 to 132 (LLAA…LNLG), 138 to 158 (GWGI…GLLG), 168 to 188 (FLIA…ALFY), 192 to 212 (LSWI…LMNW), 218 to 238 (LIWY…SGIH), 241 to 261 (IAGV…SKIL), 312 to 332 (SLVD…NAGV), 348 to 368 (LGIL…FTLI), 386 to 406 (IIGI…ITNL), and 419 to 439 (ISIL…LLLT).

This sequence belongs to the NhaA Na(+)/H(+) (TC 2.A.33) antiporter family.

Its subcellular location is the cell inner membrane. The enzyme catalyses Na(+)(in) + 2 H(+)(out) = Na(+)(out) + 2 H(+)(in). Functionally, na(+)/H(+) antiporter that extrudes sodium in exchange for external protons. This chain is Na(+)/H(+) antiporter NhaA, found in Christiangramia forsetii (strain DSM 17595 / CGMCC 1.15422 / KT0803) (Gramella forsetii).